A 691-amino-acid chain; its full sequence is Elongation factor G (691 aa).

Residues 8-283 (KKVRNIGIAA…AVVAYLPAPD (276 aa)) enclose the tr-type G domain. GTP contacts are provided by residues 17 to 24 (AHIDAGKT), 81 to 85 (DTPGH), and 135 to 138 (NKMD).

This sequence belongs to the TRAFAC class translation factor GTPase superfamily. Classic translation factor GTPase family. EF-G/EF-2 subfamily.

It is found in the cytoplasm. Catalyzes the GTP-dependent ribosomal translocation step during translation elongation. During this step, the ribosome changes from the pre-translocational (PRE) to the post-translocational (POST) state as the newly formed A-site-bound peptidyl-tRNA and P-site-bound deacylated tRNA move to the P and E sites, respectively. Catalyzes the coordinated movement of the two tRNA molecules, the mRNA and conformational changes in the ribosome. The protein is Elongation factor G of Campylobacter jejuni subsp. jejuni serotype O:23/36 (strain 81-176).